Reading from the N-terminus, the 160-residue chain is Phosphopantetheine adenylyltransferase (160 aa).

Serine 9 is a binding site for substrate. Residues 9–10 (SF) and histidine 17 each bind ATP. Residues lysine 41, isoleucine 73, and lysine 87 each contribute to the substrate site. ATP-binding positions include 88-90 (GLR), glutamate 98, and 122-128 (YSFVSSS).

The protein belongs to the bacterial CoaD family. Homohexamer. Requires Mg(2+) as cofactor.

It is found in the cytoplasm. The catalysed reaction is (R)-4'-phosphopantetheine + ATP + H(+) = 3'-dephospho-CoA + diphosphate. The protein operates within cofactor biosynthesis; coenzyme A biosynthesis; CoA from (R)-pantothenate: step 4/5. Reversibly transfers an adenylyl group from ATP to 4'-phosphopantetheine, yielding dephospho-CoA (dPCoA) and pyrophosphate. In Mycolicibacterium gilvum (strain PYR-GCK) (Mycobacterium gilvum (strain PYR-GCK)), this protein is Phosphopantetheine adenylyltransferase.